Consider the following 397-residue polypeptide: MSTSESPSSRFRELSKYINSLTNLLGVDFLSPKLKFNYRTWTTIFAIANYTGFTVFTILNNGGDWRVGLKASLMTGGLFHGLGKFLTCLLKHQDMRRLVLYSQSIYDEYETRGDSYHRTLNSNIDRLLGIMKIIRNGYVFAFCLMELLPLAMLMYDGTRVTAMQYLIPGLPLENNYCYVVTYMIQTVTMLVQGVGFYSGDLFVFLGLTQILTFADMLQVKVKELNDALEQKAEYRALVRVGASIDGAENRQRLLLDVIRWHQLFTDYCRAINALYYELIATQVLSMALAMMLSFCINLSSFHMPSAIFFVVSAYSMSIYCILGTILEFAYDQVYESICNVTWYELSGEQRKLFGFLLRESQYPHNIQILGVMSLSVRTALQIVKLIYSVSMMMMNRA.

Residues 1-39 (MSTSESPSSRFRELSKYINSLTNLLGVDFLSPKLKFNYR) are Cytoplasmic-facing. A helical membrane pass occupies residues 40–60 (TWTTIFAIANYTGFTVFTILN). Over 61 to 70 (NGGDWRVGLK) the chain is Extracellular. A helical transmembrane segment spans residues 71–90 (ASLMTGGLFHGLGKFLTCLL). The Cytoplasmic segment spans residues 91–136 (KHQDMRRLVLYSQSIYDEYETRGDSYHRTLNSNIDRLLGIMKIIRN). A helical membrane pass occupies residues 137–157 (GYVFAFCLMELLPLAMLMYDG). The Extracellular segment spans residues 158-186 (TRVTAMQYLIPGLPLENNYCYVVTYMIQT). Residues 187 to 207 (VTMLVQGVGFYSGDLFVFLGL) traverse the membrane as a helical segment. Residues 208-282 (TQILTFADML…ALYYELIATQ (75 aa)) are Cytoplasmic-facing. The chain crosses the membrane as a helical span at residues 283–299 (VLSMALAMMLSFCINLS). The Extracellular segment spans residues 300–305 (SFHMPS). A helical transmembrane segment spans residues 306-326 (AIFFVVSAYSMSIYCILGTIL). At 327 to 365 (EFAYDQVYESICNVTWYELSGEQRKLFGFLLRESQYPHN) the chain is on the cytoplasmic side. Residues 366-386 (IQILGVMSLSVRTALQIVKLI) form a helical membrane-spanning segment. The Extracellular segment spans residues 387 to 397 (YSVSMMMMNRA).

The protein belongs to the insect chemoreceptor superfamily. Heteromeric odorant receptor channel (TC 1.A.69) family. Or67d subfamily. Interacts with Orco. Complexes exist early in the endomembrane system in olfactory sensory neurons (OSNs), coupling these complexes to the conserved ciliary trafficking pathway. As to expression, expressed in olfactory sensory neurons in the antenna.

It localises to the cell membrane. In terms of biological role, odorant receptor which mediates acceptance or avoidance behavior, depending on its substrates. The odorant receptor repertoire encodes a large collection of odor stimuli that vary widely in identity, intensity, and duration. May form a complex with Orco to form odorant-sensing units, providing sensitive and prolonged odorant signaling and calcium permeability. In Drosophila melanogaster (Fruit fly), this protein is Putative odorant receptor 83c (Or83c).